Consider the following 391-residue polypeptide: GTPase Obg (391 aa).

One can recognise an Obg domain in the interval 1 to 159 (MKFVDEARIL…RELMLELMLL (159 aa)). Residues 160-333 (ADVGMLGMPN…LCWDIMEFMK (174 aa)) form the OBG-type G domain. Residues 166–173 (GMPNAGKS), 191–195 (FTTLV), 213–216 (DIPG), 283–286 (NKVD), and 314–316 (SAI) each bind GTP. Mg(2+)-binding residues include serine 173 and threonine 193.

It belongs to the TRAFAC class OBG-HflX-like GTPase superfamily. OBG GTPase family. Monomer. Requires Mg(2+) as cofactor.

The protein resides in the cytoplasm. In terms of biological role, an essential GTPase which binds GTP, GDP and possibly (p)ppGpp with moderate affinity, with high nucleotide exchange rates and a fairly low GTP hydrolysis rate. Plays a role in control of the cell cycle, stress response, ribosome biogenesis and in those bacteria that undergo differentiation, in morphogenesis control. In Photorhabdus laumondii subsp. laumondii (strain DSM 15139 / CIP 105565 / TT01) (Photorhabdus luminescens subsp. laumondii), this protein is GTPase Obg.